The following is a 364-amino-acid chain: Lipoyl synthase, chloroplastic (364 aa).

The transit peptide at 1–70 (MEQTLFNPSI…PNVKKPEWLR (70 aa)) directs the protein to the chloroplast. Residues 32 to 52 (STNSPSSNTKTTTVTVPSKKT) show a composition bias toward low complexity. Positions 32–64 (STNSPSSNTKTTTVTVPSKKTMGPYTGRDPNVK) are disordered. [4Fe-4S] cluster contacts are provided by cysteine 95, cysteine 100, cysteine 106, cysteine 126, cysteine 130, cysteine 133, and serine 341. Residues 109-330 (GGGDGIATAT…KEYGESIGFR (222 aa)) enclose the Radical SAM core domain.

This sequence belongs to the radical SAM superfamily. Lipoyl synthase family. The cofactor is [4Fe-4S] cluster.

It localises to the plastid. The protein resides in the chloroplast. It carries out the reaction [[Fe-S] cluster scaffold protein carrying a second [4Fe-4S](2+) cluster] + N(6)-octanoyl-L-lysyl-[protein] + 2 oxidized [2Fe-2S]-[ferredoxin] + 2 S-adenosyl-L-methionine + 4 H(+) = [[Fe-S] cluster scaffold protein] + N(6)-[(R)-dihydrolipoyl]-L-lysyl-[protein] + 4 Fe(3+) + 2 hydrogen sulfide + 2 5'-deoxyadenosine + 2 L-methionine + 2 reduced [2Fe-2S]-[ferredoxin]. It participates in protein modification; protein lipoylation via endogenous pathway; protein N(6)-(lipoyl)lysine from octanoyl-[acyl-carrier-protein]: step 2/2. Functionally, catalyzes the radical-mediated insertion of two sulfur atoms into the C-6 and C-8 positions of the octanoyl moiety bound to the lipoyl domains of lipoate-dependent enzymes, thereby converting the octanoylated domains into lipoylated derivatives. The sequence is that of Lipoyl synthase, chloroplastic from Ricinus communis (Castor bean).